A 78-amino-acid polypeptide reads, in one-letter code: Acyl carrier protein (78 aa).

Residues S2–Q77 form the Carrier domain. Position 37 is an O-(pantetheine 4'-phosphoryl)serine (S37).

Belongs to the acyl carrier protein (ACP) family. Post-translationally, 4'-phosphopantetheine is transferred from CoA to a specific serine of apo-ACP by AcpS. This modification is essential for activity because fatty acids are bound in thioester linkage to the sulfhydryl of the prosthetic group.

It is found in the cytoplasm. Its pathway is lipid metabolism; fatty acid biosynthesis. In terms of biological role, carrier of the growing fatty acid chain in fatty acid biosynthesis. The polypeptide is Acyl carrier protein (Sodalis glossinidius (strain morsitans)).